A 36-amino-acid polypeptide reads, in one-letter code: Glucagon-2 (36 aa).

This sequence belongs to the glucagon family.

It localises to the secreted. Functionally, glucagon plays a key role in glucose metabolism and homeostasis. Regulates blood glucose by increasing gluconeogenesis and decreasing glycolysis. In Huso dauricus (Kaluga sturgeon), this protein is Glucagon-2.